Here is a 519-residue protein sequence, read N- to C-terminus: Cytochrome P450 monooxygenase easM (519 aa).

A helical membrane pass occupies residues 16–33; sequence VAPALFASSISVLFLILS. 2 N-linked (GlcNAc...) asparagine glycosylation sites follow: Asn50 and Asn353. Cys458 contributes to the heme binding site.

Belongs to the cytochrome P450 family. It depends on heme as a cofactor.

The protein localises to the membrane. The protein operates within alkaloid biosynthesis; ergot alkaloid biosynthesis. Its function is as follows. Cytochrome P450 monooxygenase; part of the gene cluster that mediates the biosynthesis of fumiclavanine C, a fungal ergot alkaloid. DmaW catalyzes the first step of ergot alkaloid biosynthesis by condensing dimethylallyl diphosphate (DMAP) and tryptophan to form 4-dimethylallyl-L-tryptophan. The second step is catalyzed by the methyltransferase easF that methylates 4-dimethylallyl-L-tryptophan in the presence of S-adenosyl-L-methionine, resulting in the formation of 4-dimethylallyl-L-abrine. The catalase easC and the FAD-dependent oxidoreductase easE then transform 4-dimethylallyl-L-abrine to chanoclavine-I which is further oxidized by EasD in the presence of NAD(+), resulting in the formation of chanoclavine-I aldehyde. EasA reduces chanoclavine-I aldehyde to dihydrochanoclavine-I aldehyde that spontaneously dehydrates to form 6,8-dimethyl-6,7-didehydroergoline. EasG then catalyzes the reduction of 6,8-dimethyl-6,7-didehydroergoline to form festuclavine. Hydrolysis of festuclavine by easM then leads to the formation of fumigaclavine B which is in turn acetylated by easN to fumigaclavine A. Finally, easL catalyzes the conversion of fumigaclavine A into fumigaclavine C by attaching a dimethylallyl moiety to C-2 of the indole nucleus. This chain is Cytochrome P450 monooxygenase easM, found in Aspergillus fumigatus (strain ATCC MYA-4609 / CBS 101355 / FGSC A1100 / Af293) (Neosartorya fumigata).